Reading from the N-terminus, the 45-residue chain is Large ribosomal subunit protein bL34 (45 aa).

The segment covering 1-10 (MTKRTLEGTN) has biased composition (basic and acidic residues). Positions 1-27 (MTKRTLEGTNRKRKRTSGFRARMRSAT) are disordered. Over residues 11-23 (RKRKRTSGFRARM) the composition is skewed to basic residues.

The protein belongs to the bacterial ribosomal protein bL34 family.

This is Large ribosomal subunit protein bL34 from Synechococcus elongatus (strain ATCC 33912 / PCC 7942 / FACHB-805) (Anacystis nidulans R2).